Reading from the N-terminus, the 175-residue chain is Arginine repressor (175 aa).

The interval 1–23 (MSVSTPERGGAEQGKGPAIARTR) is disordered.

Belongs to the ArgR family.

The protein resides in the cytoplasm. It participates in amino-acid biosynthesis; L-arginine biosynthesis [regulation]. Functionally, regulates arginine biosynthesis genes. The polypeptide is Arginine repressor (Nocardia farcinica (strain IFM 10152)).